Reading from the N-terminus, the 371-residue chain is uncharacterized protein (371 aa).

The protein to A.pernix APE_1804 and S.solfataricus SSO2105.

This is an uncharacterized protein from Aeropyrum pernix (strain ATCC 700893 / DSM 11879 / JCM 9820 / NBRC 100138 / K1).